A 351-amino-acid chain; its full sequence is Porphobilinogen deaminase (351 aa).

Residue Cys242 is modified to S-(dipyrrolylmethanemethyl)cysteine.

The protein belongs to the HMBS family. As to quaternary structure, monomer. The cofactor is dipyrromethane.

The enzyme catalyses 4 porphobilinogen + H2O = hydroxymethylbilane + 4 NH4(+). It functions in the pathway porphyrin-containing compound metabolism; protoporphyrin-IX biosynthesis; coproporphyrinogen-III from 5-aminolevulinate: step 2/4. Its function is as follows. Tetrapolymerization of the monopyrrole PBG into the hydroxymethylbilane pre-uroporphyrinogen in several discrete steps. The polypeptide is Porphobilinogen deaminase (Rickettsia africae (strain ESF-5)).